We begin with the raw amino-acid sequence, 189 residues long: MILMKDIVRDDQEGTVLRDYAAKVSFPLTEEEQQLAKDLMEYLEISQDEELAEKYGLRAGVGLAAPQVNVSKQMAAVLVPSDDEEDDTPIFKDVIINPVIISESVQMGALTEGEGCLSVDRDIAGYVPRHDRITLKYQDVQGETHKVRLKHYPAIVCQHEIDHLHGVLFYDHINKDNPFEAPEGTVFFG.

Fe cation contacts are provided by cysteine 116 and histidine 159. Glutamate 160 is a catalytic residue. Histidine 163 is a Fe cation binding site.

This sequence belongs to the polypeptide deformylase family. It depends on Fe(2+) as a cofactor.

The enzyme catalyses N-terminal N-formyl-L-methionyl-[peptide] + H2O = N-terminal L-methionyl-[peptide] + formate. Functionally, removes the formyl group from the N-terminal Met of newly synthesized proteins. Requires at least a dipeptide for an efficient rate of reaction. N-terminal L-methionine is a prerequisite for activity but the enzyme has broad specificity at other positions. The protein is Peptide deformylase of Limosilactobacillus fermentum (strain NBRC 3956 / LMG 18251) (Lactobacillus fermentum).